The following is a 741-amino-acid chain: Catalase-peroxidase (741 aa).

A cross-link (tryptophyl-tyrosyl-methioninium (Trp-Tyr) (with M-234)) is located at residues 86-208 (WHSAGSYRIF…FAATEMGLIY (123 aa)). The Proton acceptor role is filled by H87. Positions 208–234 (YVNPEGPGGNPDPLGSAQEIRVAFRRM) form a cross-link, tryptophyl-tyrosyl-methioninium (Tyr-Met) (with W-86). H249 is a heme b binding site.

Belongs to the peroxidase family. Peroxidase/catalase subfamily. Homodimer or homotetramer. The cofactor is heme b. In terms of processing, formation of the three residue Trp-Tyr-Met cross-link is important for the catalase, but not the peroxidase activity of the enzyme.

The catalysed reaction is H2O2 + AH2 = A + 2 H2O. It carries out the reaction 2 H2O2 = O2 + 2 H2O. Its function is as follows. Bifunctional enzyme with both catalase and broad-spectrum peroxidase activity. Also displays NADH oxidase, INH lyase and isonicotinoyl-NAD synthase activities. This is Catalase-peroxidase from Archaeoglobus fulgidus (strain ATCC 49558 / DSM 4304 / JCM 9628 / NBRC 100126 / VC-16).